Consider the following 203-residue polypeptide: ATP-dependent Clp protease proteolytic subunit 1 (203 aa).

Catalysis depends on Ser-101, which acts as the Nucleophile. His-126 is a catalytic residue.

This sequence belongs to the peptidase S14 family. In terms of assembly, fourteen ClpP subunits assemble into 2 heptameric rings which stack back to back to give a disk-like structure with a central cavity, resembling the structure of eukaryotic proteasomes.

The protein localises to the cytoplasm. The enzyme catalyses Hydrolysis of proteins to small peptides in the presence of ATP and magnesium. alpha-casein is the usual test substrate. In the absence of ATP, only oligopeptides shorter than five residues are hydrolyzed (such as succinyl-Leu-Tyr-|-NHMec, and Leu-Tyr-Leu-|-Tyr-Trp, in which cleavage of the -Tyr-|-Leu- and -Tyr-|-Trp bonds also occurs).. Its function is as follows. Cleaves peptides in various proteins in a process that requires ATP hydrolysis. Has a chymotrypsin-like activity. Plays a major role in the degradation of misfolded proteins. This Synechococcus sp. (strain JA-2-3B'a(2-13)) (Cyanobacteria bacterium Yellowstone B-Prime) protein is ATP-dependent Clp protease proteolytic subunit 1.